Reading from the N-terminus, the 71-residue chain is Small ribosomal subunit protein bS18 (71 aa).

It belongs to the bacterial ribosomal protein bS18 family. In terms of assembly, part of the 30S ribosomal subunit. Forms a tight heterodimer with protein bS6.

In terms of biological role, binds as a heterodimer with protein bS6 to the central domain of the 16S rRNA, where it helps stabilize the platform of the 30S subunit. The protein is Small ribosomal subunit protein bS18 of Nostoc sp. (strain PCC 7120 / SAG 25.82 / UTEX 2576).